Here is a 585-residue protein sequence, read N- to C-terminus: Glycerol-3-phosphate acyltransferase 1 (585 aa).

3 consecutive transmembrane segments (helical) span residues Phe126–Leu146, Thr334–Phe354, and Ile356–Val376. The short motif at His403–Asp408 is the HXXXXD motif element.

The protein belongs to the GPAT/DAPAT family. Highly expressed in developing siliques and flower buds. Weakly or not expressed in roots, seedlings and leaves.

It is found in the membrane. It localises to the mitochondrion. The catalysed reaction is sn-glycerol 3-phosphate + an acyl-CoA = a 1-acyl-sn-glycero-3-phosphate + CoA. It functions in the pathway phospholipid metabolism; CDP-diacylglycerol biosynthesis; CDP-diacylglycerol from sn-glycerol 3-phosphate: step 1/3. Its function is as follows. Esterifies acyl-group from acyl-ACP to the sn-1 position of glycerol-3-phosphate, an essential step in glycerolipid biosynthesis. Involved in pollen development, by being required for tapetum differentiation and male fertility. In addition to the sporophytic effect, it also exerts a gametophytic effect on pollen performance. This Arabidopsis thaliana (Mouse-ear cress) protein is Glycerol-3-phosphate acyltransferase 1 (GPAT1).